Reading from the N-terminus, the 212-residue chain is HTH-type transcriptional regulator RutR (212 aa).

The HTH tetR-type domain occupies 17–77; that stretch reads SAKKKAILSA…AVLRQILDIW (61 aa). A DNA-binding region (H-T-H motif) is located at residues 39 to 58; sequence TRLEQIAELAGVSKTNLLYY.

Homodimer.

Its function is as follows. Master transcription regulator which represses the degradation of pyrimidines (rutABCDEFG) and purines (gcl operon) for maintenance of metabolic balance between pyrimidines and purines. It also regulates the synthesis of pyrimidine nucleotides and arginine from glutamine (carAB) and the supply of glutamate (gadABWX). The chain is HTH-type transcriptional regulator RutR (rutR) from Escherichia coli O6:H1 (strain CFT073 / ATCC 700928 / UPEC).